A 371-amino-acid polypeptide reads, in one-letter code: MLKFTLHKKDGYARRGTLELNHGKIETPVFMPVGTYGSVKAMNPQNLHDIKAQIILGNTYHLWLRPGLEVIGQFGGLHGFIGWDKPILTDSGGFQVFSLSDMRKLTEEGCTFKSPINGDKLFLSPEISMKIQTVLNSDIAMQLDECTPGEATREQARKSLQMSLRWAERSKKAFEDLKNPNALFGIVQGAMYEDLREESLRGLEQFDFPGLAVGGLSVGEPKPEMYRMLRAVGPILPEHKPHYLMGVGTPEDLVYGVAHGIDMFDCVMPTRNARNGWLFTRFGDLKIKNAKHKLDKRPIDESCTCYACQNFSRAYLHHLHRAGEILGAQLNTIHNLHFYQVIMAEMRDAIEQGKFADWQAQFHENRARGTD.

Residue D90 is the Proton acceptor of the active site. Residues 90–94 (DSGGF), D144, Q188, and G215 each bind substrate. Positions 246–252 (GVGTPED) are RNA binding. D265 serves as the catalytic Nucleophile. The segment at 270–274 (TRNAR) is RNA binding; important for wobble base 34 recognition. Positions 303, 305, 308, and 334 each coordinate Zn(2+).

This sequence belongs to the queuine tRNA-ribosyltransferase family. In terms of assembly, homodimer. Within each dimer, one monomer is responsible for RNA recognition and catalysis, while the other monomer binds to the replacement base PreQ1. It depends on Zn(2+) as a cofactor.

The enzyme catalyses 7-aminomethyl-7-carbaguanine + guanosine(34) in tRNA = 7-aminomethyl-7-carbaguanosine(34) in tRNA + guanine. The protein operates within tRNA modification; tRNA-queuosine biosynthesis. Catalyzes the base-exchange of a guanine (G) residue with the queuine precursor 7-aminomethyl-7-deazaguanine (PreQ1) at position 34 (anticodon wobble position) in tRNAs with GU(N) anticodons (tRNA-Asp, -Asn, -His and -Tyr). Catalysis occurs through a double-displacement mechanism. The nucleophile active site attacks the C1' of nucleotide 34 to detach the guanine base from the RNA, forming a covalent enzyme-RNA intermediate. The proton acceptor active site deprotonates the incoming PreQ1, allowing a nucleophilic attack on the C1' of the ribose to form the product. After dissociation, two additional enzymatic reactions on the tRNA convert PreQ1 to queuine (Q), resulting in the hypermodified nucleoside queuosine (7-(((4,5-cis-dihydroxy-2-cyclopenten-1-yl)amino)methyl)-7-deazaguanosine). The polypeptide is Queuine tRNA-ribosyltransferase (Neisseria meningitidis serogroup C (strain 053442)).